A 376-amino-acid polypeptide reads, in one-letter code: Fibromodulin (376 aa).

Positions 1–18 are cleaved as a signal peptide; sequence MQWTSLLLLAGLFSLSQA. Residue Gln19 is modified to Pyrrolidone carboxylic acid. Sulfotyrosine occurs at positions 20, 38, 39, 45, 47, 53, and 55. Positions 67–105 constitute an LRRNT domain; sequence SPSPPDPRDCPQECDCPPNFPTAMYCDNRNLKYLPFVPS. LRR repeat units follow at residues 106-127, 130-151, 156-176, 177-198, 201-222, 224-245, 246-266, and 269-289; these read RMKY…VFDN, GLLW…RKVF, HLER…PLPR, SLRE…ALEG, NLTA…MRGL, SLIL…LPSA, LEQL…YFRG, and KLLY…ASNT. N-linked (GlcNAc...) (keratan sulfate) asparagine glycosylation is present at Asn127. Residue Asn166 is glycosylated (N-linked (GlcNAc...) (keratan sulfate) asparagine). Residue Asn201 is glycosylated (N-linked (GlcNAc...) (keratan sulfate) asparagine). N-linked (GlcNAc...) (keratan sulfate) asparagine glycosylation occurs at Asn291. LRR repeat units follow at residues 294–315 and 316–335; these read SLLE…NTNL and ENLY…SFCT. Cysteines 334 and 367 form a disulfide. A glycan (N-linked (GlcNAc...) asparagine) is linked at Asn341. The stretch at 344-365 is one LRR 11 repeat; sequence KLQVLRLDGNEIKRSAMPADAP.

The protein belongs to the small leucine-rich proteoglycan (SLRP) family. SLRP class II subfamily. Binds to type I and type II collagen. Binds keratan sulfate chains.

Its subcellular location is the secreted. The protein resides in the extracellular space. It localises to the extracellular matrix. Functionally, affects the rate of fibrils formation. May have a primary role in collagen fibrillogenesis. This Homo sapiens (Human) protein is Fibromodulin (FMOD).